A 231-amino-acid polypeptide reads, in one-letter code: MGGAVTKSETLQKEWVPETKLEAKIIEAVQRRASRGTTMKSFNSIVLKFPKIDDGLRNCKAIFQEFDEDSNGSIDHTELKNCIRKLEISFDEEEINDLFKACDINEDMGITFTEFIVLLCLVYLLKDDSSTLQKKWTMGMPKLEPTFETLVDTFVFLDENKDGYVSREEMVRAIDESGERSSGRIAMKRFEEMDWDKNGMVNFKEFLFAFTQWVGIDENEEEEEEDNNEKA.

4 EF-hand domains span residues 54 to 89, 90 to 125, 145 to 180, and 181 to 216; these read DGLR…LEIS, FDEE…VYLL, PTFE…SGER, and SSGR…WVGI. Positions 67, 69, 71, 73, and 78 each coordinate Ca(2+). Asp-158, Asn-160, Asp-162, Tyr-164, Glu-169, Asp-194, Asp-196, Asn-198, Met-200, and Glu-205 together coordinate Ca(2+).

In terms of biological role, potential calcium sensor. The polypeptide is Probable calcium-binding protein CML21 (CML21) (Arabidopsis thaliana (Mouse-ear cress)).